The chain runs to 339 residues: UDP-N-acetylenolpyruvoylglucosamine reductase (339 aa).

An FAD-binding PCMH-type domain is found at 19-189 (VDVQARLFAE…LRVRFKLSRV (171 aa)). Arg-166 is a catalytic residue. Ser-239 (proton donor) is an active-site residue. Glu-335 is a catalytic residue.

It belongs to the MurB family. FAD is required as a cofactor.

It is found in the cytoplasm. The catalysed reaction is UDP-N-acetyl-alpha-D-muramate + NADP(+) = UDP-N-acetyl-3-O-(1-carboxyvinyl)-alpha-D-glucosamine + NADPH + H(+). Its pathway is cell wall biogenesis; peptidoglycan biosynthesis. In terms of biological role, cell wall formation. This chain is UDP-N-acetylenolpyruvoylglucosamine reductase, found in Pseudomonas savastanoi pv. phaseolicola (strain 1448A / Race 6) (Pseudomonas syringae pv. phaseolicola (strain 1448A / Race 6)).